We begin with the raw amino-acid sequence, 176 residues long: Inorganic pyrophosphatase (176 aa).

Substrate is bound by residues lysine 30, arginine 44, and tyrosine 56. Aspartate 66, aspartate 71, and aspartate 103 together coordinate Mg(2+). Tyrosine 140 lines the substrate pocket.

This sequence belongs to the PPase family. Homohexamer. Mg(2+) is required as a cofactor.

It localises to the cytoplasm. It catalyses the reaction diphosphate + H2O = 2 phosphate + H(+). Catalyzes the hydrolysis of inorganic pyrophosphate (PPi) forming two phosphate ions. The sequence is that of Inorganic pyrophosphatase from Methanothermobacter thermautotrophicus (strain ATCC 29096 / DSM 1053 / JCM 10044 / NBRC 100330 / Delta H) (Methanobacterium thermoautotrophicum).